A 202-amino-acid chain; its full sequence is FMN-dependent NADH:quinone oxidoreductase (202 aa).

Residues Ser10, 16–18, and 96–99 each bind FMN; these read SAS and MWNF.

This sequence belongs to the azoreductase type 1 family. In terms of assembly, homodimer. It depends on FMN as a cofactor.

The enzyme catalyses 2 a quinone + NADH + H(+) = 2 a 1,4-benzosemiquinone + NAD(+). The catalysed reaction is N,N-dimethyl-1,4-phenylenediamine + anthranilate + 2 NAD(+) = 2-(4-dimethylaminophenyl)diazenylbenzoate + 2 NADH + 2 H(+). In terms of biological role, quinone reductase that provides resistance to thiol-specific stress caused by electrophilic quinones. Also exhibits azoreductase activity. Catalyzes the reductive cleavage of the azo bond in aromatic azo compounds to the corresponding amines. The polypeptide is FMN-dependent NADH:quinone oxidoreductase (Beijerinckia indica subsp. indica (strain ATCC 9039 / DSM 1715 / NCIMB 8712)).